Here is a 392-residue protein sequence, read N- to C-terminus: O-phospho-L-seryl-tRNA:Cys-tRNA synthase 1 (392 aa).

Pyridoxal 5'-phosphate-binding positions include 85-86, N190, and 213-215; these read AR and SGH. The residue at position 216 (K216) is an N6-(pyridoxal phosphate)lysine.

The protein belongs to the SepCysS family. As to quaternary structure, homodimer. Interacts with SepRS. Requires pyridoxal 5'-phosphate as cofactor.

The enzyme catalyses O-phospho-L-seryl-tRNA(Cys) + hydrogen sulfide + H(+) = L-cysteinyl-tRNA(Cys) + phosphate. Its function is as follows. Converts O-phospho-L-seryl-tRNA(Cys) (Sep-tRNA(Cys)) to L-cysteinyl-tRNA(Cys) (Cys-tRNA(Cys)). This is O-phospho-L-seryl-tRNA:Cys-tRNA synthase 1 from Methanoregula boonei (strain DSM 21154 / JCM 14090 / 6A8).